A 255-amino-acid polypeptide reads, in one-letter code: tRNA (guanine-N(1)-)-methyltransferase (255 aa).

S-adenosyl-L-methionine contacts are provided by residues glycine 113 and 133 to 138; that span reads IGDYVL.

It belongs to the RNA methyltransferase TrmD family. As to quaternary structure, homodimer.

It localises to the cytoplasm. It catalyses the reaction guanosine(37) in tRNA + S-adenosyl-L-methionine = N(1)-methylguanosine(37) in tRNA + S-adenosyl-L-homocysteine + H(+). Functionally, specifically methylates guanosine-37 in various tRNAs. The protein is tRNA (guanine-N(1)-)-methyltransferase of Klebsiella pneumoniae (strain 342).